The chain runs to 472 residues: GTPase HflX (472 aa).

The interval Met1–Ala21 is disordered. One can recognise a Hflx-type G domain in the interval Pro230–Ser396. GTP-binding positions include Gly236 to Ser243, Phe261 to Asp265, Asp283 to Gly286, Asn349 to Asp352, and Ser374 to Lys376. Residues Ser243 and Thr263 each coordinate Mg(2+).

The protein belongs to the TRAFAC class OBG-HflX-like GTPase superfamily. HflX GTPase family. In terms of assembly, monomer. Associates with the 50S ribosomal subunit. Mg(2+) serves as cofactor.

The protein localises to the cytoplasm. Its function is as follows. GTPase that associates with the 50S ribosomal subunit and may have a role during protein synthesis or ribosome biogenesis. Specific for GTP. The sequence is that of GTPase HflX from Chlamydia pneumoniae (Chlamydophila pneumoniae).